The primary structure comprises 153 residues: Large ribosomal subunit protein uL13 (153 aa).

The protein belongs to the universal ribosomal protein uL13 family. In terms of assembly, part of the 50S ribosomal subunit.

Functionally, this protein is one of the early assembly proteins of the 50S ribosomal subunit, although it is not seen to bind rRNA by itself. It is important during the early stages of 50S assembly. This is Large ribosomal subunit protein uL13 from Azorhizobium caulinodans (strain ATCC 43989 / DSM 5975 / JCM 20966 / LMG 6465 / NBRC 14845 / NCIMB 13405 / ORS 571).